A 254-amino-acid chain; its full sequence is Dihydroorotate dehydrogenase B (NAD(+)), electron transfer subunit (254 aa).

The FAD-binding FR-type domain maps to 1 to 99 (MLQTEMKVIQ…LGPLGKGFDI (99 aa)). FAD-binding positions include 50 to 53 (RPIS), 67 to 69 (LYR), and 74 to 75 (GT). Residues Cys218, Cys223, Cys226, and Cys241 each coordinate [2Fe-2S] cluster.

This sequence belongs to the PyrK family. In terms of assembly, heterotetramer of 2 PyrK and 2 PyrD type B subunits. [2Fe-2S] cluster serves as cofactor. Requires FAD as cofactor.

It participates in pyrimidine metabolism; UMP biosynthesis via de novo pathway; orotate from (S)-dihydroorotate (NAD(+) route): step 1/1. In terms of biological role, responsible for channeling the electrons from the oxidation of dihydroorotate from the FMN redox center in the PyrD type B subunit to the ultimate electron acceptor NAD(+). The sequence is that of Dihydroorotate dehydrogenase B (NAD(+)), electron transfer subunit from Listeria welshimeri serovar 6b (strain ATCC 35897 / DSM 20650 / CCUG 15529 / CIP 8149 / NCTC 11857 / SLCC 5334 / V8).